We begin with the raw amino-acid sequence, 440 residues long: GTPase Der (440 aa).

2 consecutive EngA-type G domains span residues 4–168 and 177–352; these read PIVA…NPED and IKVA…NQNA. Residues 10 to 17, 57 to 61, 120 to 123, 183 to 190, 230 to 234, and 295 to 298 each bind GTP; these read GRPNVGKS, DTGGI, NKVD, GKPNVGKS, DTAGI, and NKWD. One can recognise a KH-like domain in the interval 353-437; that stretch reads MRIPTGALNE…PIRFILREKT (85 aa).

Belongs to the TRAFAC class TrmE-Era-EngA-EngB-Septin-like GTPase superfamily. EngA (Der) GTPase family. In terms of assembly, associates with the 50S ribosomal subunit.

Its function is as follows. GTPase that plays an essential role in the late steps of ribosome biogenesis. The sequence is that of GTPase Der from Alkaliphilus oremlandii (strain OhILAs) (Clostridium oremlandii (strain OhILAs)).